We begin with the raw amino-acid sequence, 369 residues long: Ferredoxin--NADP reductase 2 (369 aa).

The interval 1-23 (MDLSIPNPVADTTKQVDGGSPAG) is disordered. FAD contacts are provided by Asp58, Gln66, Tyr71, Val111, Phe146, Asp311, and Thr352.

This sequence belongs to the ferredoxin--NADP reductase type 2 family. As to quaternary structure, homodimer. FAD serves as cofactor.

It catalyses the reaction 2 reduced [2Fe-2S]-[ferredoxin] + NADP(+) + H(+) = 2 oxidized [2Fe-2S]-[ferredoxin] + NADPH. The chain is Ferredoxin--NADP reductase 2 from Cupriavidus necator (strain ATCC 17699 / DSM 428 / KCTC 22496 / NCIMB 10442 / H16 / Stanier 337) (Ralstonia eutropha).